Here is a 75-residue protein sequence, read N- to C-terminus: MISAGVDSKDLAKRGESLIRQSTNRYLTTVKIAFRAKQRRFDDFDGLLEESSVKPVHRAIVELSDEQDQPDLLPG.

It belongs to the RNA polymerase subunit omega family. As to quaternary structure, in cyanobacteria the RNAP catalytic core is composed of 2 alpha, 1 beta, 1 beta', 1 gamma and 1 omega subunit. When a sigma factor is associated with the core the holoenzyme is formed, which can initiate transcription.

The catalysed reaction is RNA(n) + a ribonucleoside 5'-triphosphate = RNA(n+1) + diphosphate. Its function is as follows. Promotes RNA polymerase assembly. Latches the N- and C-terminal regions of the beta' subunit thereby facilitating its interaction with the beta and alpha subunits. In Synechococcus sp. (strain CC9311), this protein is DNA-directed RNA polymerase subunit omega.